The chain runs to 315 residues: Diacylglycerol kinase (315 aa).

The region spanning 1 to 132 is the DAGKc domain; sequence MRKRARIIYN…VDIGKMNNRY (132 aa). Residues 10–14, Thr-41, 67–73, and Thr-94 each bind ATP; these read NPTSG and GDGTLNE. 3 residues coordinate Mg(2+): Lys-213, Asp-216, and Tyr-218. The active-site Proton acceptor is the Glu-273.

It belongs to the diacylglycerol/lipid kinase family. In terms of assembly, homodimer. Requires Mg(2+) as cofactor.

The enzyme catalyses a 1,2-diacyl-sn-glycerol + ATP = a 1,2-diacyl-sn-glycero-3-phosphate + ADP + H(+). Catalyzes the phosphorylation of diacylglycerol (DAG) into phosphatidic acid. Is a key enzyme involved in the production of lipoteichoic acid by reintroducing DAG formed from the breakdown of membrane phospholipids into the phosphatidylglycerol biosynthetic pathway. The polypeptide is Diacylglycerol kinase (dagK) (Staphylococcus aureus (strain USA300 / TCH1516)).